The following is a 161-amino-acid chain: MEHGHATNRVDEYGNPVAGHGVGTGMGAHGGVGTGAAAGGHFQPTREEHKAGGILQRSGSSSSSSSEDDGMGGRRKKGLKDKIKEKLPGGHGDQQQTGGTYGQHGHTGMTGTGEHGATATGGTYGQQGHTGMTGTGAHGTDGTGEKKGIMDKIKEKLPGQH.

The segment covering 1–12 (MEHGHATNRVDE) has biased composition (basic and acidic residues). The segment at 1–161 (MEHGHATNRV…KIKEKLPGQH (161 aa)) is disordered. The segment covering 20–38 (HGVGTGMGAHGGVGTGAAA) has biased composition (gly residues). Low complexity-rich tracts occupy residues 93–107 (DQQQTGGTYGQHGHT) and 115–130 (HGATATGGTYGQQGHT). 2 tandem repeats follow at residues 101 to 123 (YGQHGHTGMTGTGEHGATATGGT) and 124 to 144 (YGQQGHTGMTGTGAHGTDGTG). The tract at residues 101 to 144 (YGQHGHTGMTGTGEHGATATGGTYGQQGHTGMTGTGAHGTDGTG) is 2 X approximate tandem repeats. Gly residues predominate over residues 131–142 (GMTGTGAHGTDG). The span at 143 to 161 (TGEKKGIMDKIKEKLPGQH) shows a compositional bias: basic and acidic residues.

It belongs to the plant dehydrin family.

In Hordeum vulgare (Barley), this protein is Dehydrin DHN3 (DHN3).